We begin with the raw amino-acid sequence, 1302 residues long: Cingulin-like protein 1 (1302 aa).

The segment at 1 to 554 (MELYFGEYQH…ELTQQTNEET (554 aa)) is head. Residues 37-51 (AGSYGVSIRVQGIDG) carry the ZIM motif. The tract at residues 75-104 (PFPPPVINNLPLHSSNGSVPKENSEELQLP) is disordered. Phosphoserine is present on residues Ser-112 and Ser-202. 3 disordered regions span residues 186 to 209 (KKPWTCFPKPSNSQPTSPSLEDPA), 251 to 305 (FTSG…TPTS), and 364 to 392 (PGLQRRGRSGKRNRINTDDRKRSRSVDSA). Residues 195 to 204 (PSNSQPTSPS) show a composition bias toward polar residues. The segment covering 264 to 282 (AHPETKKTRPDVLPFRRQD) has biased composition (basic and acidic residues). 3 positions are modified to phosphoserine: Ser-283, Ser-297, and Ser-298. Low complexity predominate over residues 296 to 305 (SSSSSTTPTS). Residues 366-377 (LQRRGRSGKRNR) show a composition bias toward basic residues. Basic and acidic residues predominate over residues 378 to 388 (INTDDRKRSRS). Phosphoserine is present on residues Ser-388, Ser-391, and Ser-486. Residues 604 to 1258 (NSTSEVKDLL…QLNSMKKDLR (655 aa)) are a coiled coil. Residues 655–664 (RSQHNEKVEE) show a composition bias toward basic and acidic residues. The tract at residues 655–675 (RSQHNEKVEENSTLQQRLEES) is disordered. At Ser-708 the chain carries Phosphoserine. Disordered stretches follow at residues 903-929 (AAQGNLSQTTQEQKQLSEKLKEESEQK) and 1263-1287 (PSKVLDDMDDDDDLSTDGGSLYEAP). The segment covering 917-929 (QLSEKLKEESEQK) has biased composition (basic and acidic residues). Residues 1263 to 1302 (PSKVLDDMDDDDDLSTDGGSLYEAPVSYTFSKDSTVASQI) are tail.

Belongs to the cingulin family. As to quaternary structure, homodimer or oligomer. Interacts with CD2AP and SH3BP1; probably part of a complex at cell junctions. In terms of tissue distribution, smooth muscle, spleen, testis, fetal brain, amygdala, corpus callosum, cerebellum, thalamus and subthalamic nucleus of adult brain.

It localises to the cell junction. The protein localises to the tight junction. May be involved in anchoring the apical junctional complex, especially tight junctions, to actin-based cytoskeletons. This is Cingulin-like protein 1 (CGNL1) from Homo sapiens (Human).